The primary structure comprises 126 residues: Lymphocyte antigen 6 complex locus protein G6c (126 aa).

Residues 1-19 form the signal peptide; the sequence is MKHLLLLTLSALLYCWVSA. One can recognise a UPAR/Ly6 domain in the interval 21 to 112; the sequence is TRCHSCYKVP…PRPTPALALI (92 aa). Intrachain disulfides connect C23/C48, C26/C34, and C40/C66. N-linked (GlcNAc...) (high mannose) asparagine glycosylation occurs at N89. C93 and C98 are joined by a disulfide. S100 carries the GPI-anchor amidated serine lipid modification. Residues 101-126 constitute a propeptide, removed in mature form; the sequence is PAPRPTPALALISLTSLAGLGLWLLH.

Monomer. In terms of processing, N-glycosylated. Highly expressed at the leading edges of cells, on filopodia.

The protein localises to the cell membrane. This chain is Lymphocyte antigen 6 complex locus protein G6c (Ly6g6c), found in Mus musculus (Mouse).